Here is a 644-residue protein sequence, read N- to C-terminus: Exoribonuclease 2 (644 aa).

The RNB domain occupies 189–516 (REDLTALDFV…NHRLLKAVIK (328 aa)). One can recognise an S1 motif domain in the interval 561–643 (DTRFAAEIVD…ETRSIIARPV (83 aa)).

This sequence belongs to the RNR ribonuclease family. RNase II subfamily.

The protein localises to the cytoplasm. It catalyses the reaction Exonucleolytic cleavage in the 3'- to 5'-direction to yield nucleoside 5'-phosphates.. Functionally, involved in mRNA degradation. Hydrolyzes single-stranded polyribonucleotides processively in the 3' to 5' direction. The sequence is that of Exoribonuclease 2 from Escherichia coli O127:H6 (strain E2348/69 / EPEC).